Here is a 487-residue protein sequence, read N- to C-terminus: Bifunctional protein HldE (487 aa).

A ribokinase region spans residues 1–326 (MERREVESFF…QEIVAEVGHG (326 aa)). 205–208 (NRKE) is a binding site for ATP. The active site involves D275. A cytidylyltransferase region spans residues 356–487 (FTNGCFDLLH…RIIEKILSSY (132 aa)).

It in the N-terminal section; belongs to the carbohydrate kinase PfkB family. The protein in the C-terminal section; belongs to the cytidylyltransferase family. Homodimer.

It carries out the reaction D-glycero-beta-D-manno-heptose 7-phosphate + ATP = D-glycero-beta-D-manno-heptose 1,7-bisphosphate + ADP + H(+). The enzyme catalyses D-glycero-beta-D-manno-heptose 1-phosphate + ATP + H(+) = ADP-D-glycero-beta-D-manno-heptose + diphosphate. The protein operates within nucleotide-sugar biosynthesis; ADP-L-glycero-beta-D-manno-heptose biosynthesis; ADP-L-glycero-beta-D-manno-heptose from D-glycero-beta-D-manno-heptose 7-phosphate: step 1/4. Its pathway is nucleotide-sugar biosynthesis; ADP-L-glycero-beta-D-manno-heptose biosynthesis; ADP-L-glycero-beta-D-manno-heptose from D-glycero-beta-D-manno-heptose 7-phosphate: step 3/4. Catalyzes the phosphorylation of D-glycero-D-manno-heptose 7-phosphate at the C-1 position to selectively form D-glycero-beta-D-manno-heptose-1,7-bisphosphate. Functionally, catalyzes the ADP transfer from ATP to D-glycero-beta-D-manno-heptose 1-phosphate, yielding ADP-D-glycero-beta-D-manno-heptose. The polypeptide is Bifunctional protein HldE (Citrifermentans bemidjiense (strain ATCC BAA-1014 / DSM 16622 / JCM 12645 / Bem) (Geobacter bemidjiensis)).